The chain runs to 426 residues: Formyl-CoA:oxalate CoA-transferase (426 aa).

CoA-binding positions include 17 to 18, Arg-38, 72 to 75, 96 to 98, Arg-104, and 136 to 139; these read QS, LDTK, NFG, and KVYE. Asp-168 serves as the catalytic Nucleophile. Residue 247 to 249 participates in substrate binding; sequence GGQ.

This sequence belongs to the CoA-transferase III family. Frc subfamily. In terms of assembly, homodimer.

It catalyses the reaction formyl-CoA + oxalate = oxalyl-CoA + formate. Its pathway is metabolic intermediate degradation; oxalate degradation; CO(2) and formate from oxalate: step 1/2. Involved in the catabolism of oxalate and in the adapatation to low pH via the induction of the oxalate-dependent acid tolerance response (ATR). Catalyzes the transfer of the CoA moiety from formyl-CoA to oxalate. This Rhodopseudomonas palustris (strain BisB18) protein is Formyl-CoA:oxalate CoA-transferase.